Reading from the N-terminus, the 241-residue chain is Small ribosomal subunit protein uS2c (241 aa).

This sequence belongs to the universal ribosomal protein uS2 family.

The protein localises to the plastid. It localises to the chloroplast. In Porphyra purpurea (Red seaweed), this protein is Small ribosomal subunit protein uS2c (rps2).